We begin with the raw amino-acid sequence, 99 residues long: Integration host factor subunit alpha (99 aa).

It belongs to the bacterial histone-like protein family. Heterodimer of an alpha and a beta chain.

This protein is one of the two subunits of integration host factor, a specific DNA-binding protein that functions in genetic recombination as well as in transcriptional and translational control. This is Integration host factor subunit alpha from Stenotrophomonas maltophilia (strain R551-3).